The following is a 115-amino-acid chain: MKFVLLFGVLLVTLFSYSSAEMLDDFDQADEDELLSSIEKEEARAKECTPRFYDCSHDRHSCCRSELFKDVCTCFYPEGGDNEVCTCQQPKHLKYMEKAADKAKKFGGKIKKWFG.

A signal peptide spans 1 to 20 (MKFVLLFGVLLVTLFSYSSA). The propeptide occupies 21–44 (EMLDDFDQADEDELLSSIEKEEAR). 4 disulfides stabilise this stretch: Cys-48–Cys-63, Cys-55–Cys-72, Cys-62–Cys-87, and Cys-74–Cys-85.

It belongs to the neurotoxin 19 (CSTX) family. 01 subfamily. In terms of tissue distribution, expressed by the venom gland.

The protein localises to the secreted. This chain is U3-lycotoxin-Ls1a, found in Lycosa singoriensis (Wolf spider).